Reading from the N-terminus, the 447-residue chain is UDP-glycosyltransferase 79B9 (447 aa).

Residues Ser260, 319-321 (VQQ), 336-344 (HCGFGSMWE), and 358-361 (LCDQ) contribute to the UDP-alpha-D-glucose site.

This sequence belongs to the UDP-glycosyltransferase family.

The sequence is that of UDP-glycosyltransferase 79B9 (UGT79B9) from Arabidopsis thaliana (Mouse-ear cress).